A 301-amino-acid polypeptide reads, in one-letter code: Ribosomal protein L11 methyltransferase (301 aa).

Positions 146, 167, 189, and 237 each coordinate S-adenosyl-L-methionine.

This sequence belongs to the methyltransferase superfamily. PrmA family.

It is found in the cytoplasm. It carries out the reaction L-lysyl-[protein] + 3 S-adenosyl-L-methionine = N(6),N(6),N(6)-trimethyl-L-lysyl-[protein] + 3 S-adenosyl-L-homocysteine + 3 H(+). In terms of biological role, methylates ribosomal protein L11. The sequence is that of Ribosomal protein L11 methyltransferase from Prochlorococcus marinus (strain MIT 9313).